Consider the following 98-residue polypeptide: DNA-directed RNA polymerase subunit omega (98 aa).

It belongs to the RNA polymerase subunit omega family. The RNAP catalytic core consists of 2 alpha, 1 beta, 1 beta' and 1 omega subunit. When a sigma factor is associated with the core the holoenzyme is formed, which can initiate transcription.

The catalysed reaction is RNA(n) + a ribonucleoside 5'-triphosphate = RNA(n+1) + diphosphate. Its function is as follows. Promotes RNA polymerase assembly. Latches the N- and C-terminal regions of the beta' subunit thereby facilitating its interaction with the beta and alpha subunits. This Tropheryma whipplei (strain Twist) (Whipple's bacillus) protein is DNA-directed RNA polymerase subunit omega.